A 266-amino-acid chain; its full sequence is uncharacterized protein (266 aa).

The first 22 residues, 1–22 (MRYLKKLAWFISVIILGIFIIG), serve as a signal peptide directing secretion. C23 carries N-palmitoyl cysteine lipidation. C23 carries the S-diacylglycerol cysteine lipid modification.

The protein belongs to the staphylococcal tandem lipoprotein family.

The protein resides in the cell membrane. This is an uncharacterized protein from Staphylococcus aureus (strain USA300).